A 389-amino-acid polypeptide reads, in one-letter code: Inner membrane transport protein YdhP (389 aa).

The Cytoplasmic portion of the chain corresponds to methionine 1–proline 6. The helical transmembrane segment at leucine 7–leucine 27 threads the bilayer. Residues leucine 28–glycine 43 are Periplasmic-facing. The chain crosses the membrane as a helical span at residues methionine 44–leucine 64. Residues serine 65–arginine 70 are Cytoplasmic-facing. A helical transmembrane segment spans residues serine 71–proline 91. The Periplasmic segment spans residues aspartate 92 to arginine 100. A helical transmembrane segment spans residues isoleucine 101–valine 121. The Cytoplasmic portion of the chain corresponds to valine 122 to alanine 130. The chain crosses the membrane as a helical span at residues valine 131–tryptophan 151. Over leucine 152–arginine 159 the chain is Periplasmic. The chain crosses the membrane as a helical span at residues methionine 160–leucine 180. Over proline 181 to valine 203 the chain is Cytoplasmic. Residues leucine 204–isoleucine 224 form a helical membrane-spanning segment. The Periplasmic portion of the chain corresponds to serine 225–proline 236. Residues valine 237–glycine 257 form a helical membrane-spanning segment. Topologically, residues glycine 258 to asparagine 266 are cytoplasmic. The helical transmembrane segment at glycine 267 to alanine 287 threads the bilayer. Residues arginine 288–glutamate 290 are Periplasmic-facing. A helical transmembrane segment spans residues phenylalanine 291–leucine 311. The Cytoplasmic segment spans residues glutamine 312–asparagine 330. The chain crosses the membrane as a helical span at residues isoleucine 331 to alanine 351. Over glycine 352 to serine 356 the chain is Periplasmic. The chain crosses the membrane as a helical span at residues phenylalanine 357–alanine 377. Residues arginine 378–serine 389 lie on the Cytoplasmic side of the membrane.

Belongs to the major facilitator superfamily.

It localises to the cell inner membrane. This chain is Inner membrane transport protein YdhP (ydhP), found in Escherichia coli (strain K12).